The following is a 1298-amino-acid chain: Ras guanine nucleotide exchange factor Q (1298 aa).

Disordered stretches follow at residues 1 to 26, 46 to 88, 211 to 271, 314 to 384, and 459 to 533; these read MDIN…INNF, NNNI…SIEG, NISN…GPLK, YTPP…QQQQ, and LSNG…STTT. 2 stretches are compositionally biased toward low complexity: residues 211 to 245 and 315 to 384; these read NISN…NSNN and TPPS…QQQQ. The stretch at 352 to 389 forms a coiled coil; it reads SSLNANNNTNNNNQQLQQQQQQQQQQQLQQQQQLTKSY. Polar residues predominate over residues 473–482; the sequence is LHLSTESTTS. Low complexity-rich tracts occupy residues 483 to 501 and 508 to 533; these read NNNN…NNNN and TTNS…STTT. Residues 550 to 689 form the N-terminal Ras-GEF domain; it reads DKDEVIAGER…YLKKAINDSG (140 aa). The 79-residue stretch at 723–801 folds into the DEP domain; that stretch reads MSQSLQLKER…SSSSTTTTTT (79 aa). Disordered regions lie at residues 781-864 and 884-920; these read SKSG…PNSI and GIAN…SNSF. Low complexity predominate over residues 783-864; the sequence is SGSSFSPSSS…ITSTSLPNSI (82 aa). The Ras-GEF domain occupies 964–1193; sequence HPVEIARQLT…YKASHMIEQP (230 aa). A disordered region spans residues 1214–1267; it reads TTTTTNNLNNNNNNNNPNNNNNNNNNSANNKSSPSPSPSSSPITSSPISSLTIN.

In terms of biological role, promotes the exchange of Ras-bound GDP by GTP. Seems to play a role in chemotaxis. This chain is Ras guanine nucleotide exchange factor Q (gefQ), found in Dictyostelium discoideum (Social amoeba).